The primary structure comprises 156 residues: ATP synthase subunit b (156 aa).

The helical transmembrane segment at 5–27 (ITLIGQMITFAIFVGFTMKFVWP) threads the bilayer.

It belongs to the ATPase B chain family. As to quaternary structure, F-type ATPases have 2 components, F(1) - the catalytic core - and F(0) - the membrane proton channel. F(1) has five subunits: alpha(3), beta(3), gamma(1), delta(1), epsilon(1). F(0) has three main subunits: a(1), b(2) and c(10-14). The alpha and beta chains form an alternating ring which encloses part of the gamma chain. F(1) is attached to F(0) by a central stalk formed by the gamma and epsilon chains, while a peripheral stalk is formed by the delta and b chains.

The protein localises to the cell inner membrane. F(1)F(0) ATP synthase produces ATP from ADP in the presence of a proton or sodium gradient. F-type ATPases consist of two structural domains, F(1) containing the extramembraneous catalytic core and F(0) containing the membrane proton channel, linked together by a central stalk and a peripheral stalk. During catalysis, ATP synthesis in the catalytic domain of F(1) is coupled via a rotary mechanism of the central stalk subunits to proton translocation. Functionally, component of the F(0) channel, it forms part of the peripheral stalk, linking F(1) to F(0). In Francisella philomiragia subsp. philomiragia (strain ATCC 25017 / CCUG 19701 / FSC 153 / O#319-036), this protein is ATP synthase subunit b.